Reading from the N-terminus, the 1555-residue chain is Protein TASOR (1555 aa).

5 disordered regions span residues 1-74, 645-711, 744-773, 870-911, and 1390-1462; these read MEEN…DKRA, QKKK…RQET, QNST…GQDQ, ALPN…TTPS, and NQGD…PTLD. Residues 35-47 show a composition bias toward polar residues; it reads VQQTLKRTNSTES. Over residues 61 to 71 the composition is skewed to basic residues; it reads RRFQIPRKSRD. A compositionally biased stretch (basic and acidic residues) spans 667-688; sequence DRQSEKAWKHRKCEENVHHDNE. Composition is skewed to polar residues over residues 692 to 702 and 744 to 761; these read SAQSLISSLGG and QNST…LSQA. Positions 888 to 904 are enriched in basic and acidic residues; it reads PLHETERQRPRHDRDYC. The segment covering 1402–1417 has biased composition (acidic residues); sequence SKEEEDMSLDSEDDTP. The segment covering 1448 to 1458 has biased composition (polar residues); the sequence is ESPSTLNQGKT.

The protein belongs to the TASOR family. As to quaternary structure, component of the HUSH complex.

The protein resides in the nucleus. The protein localises to the chromosome. In terms of biological role, component of the HUSH complex, a multiprotein complex that mediates epigenetic repression. The HUSH complex is recruited to genomic loci rich in H3K9me3 and is probably required to maintain transcriptional silencing by promoting further deposition of H3K9me3. The sequence is that of Protein TASOR from Xenopus laevis (African clawed frog).